The following is a 177-amino-acid chain: Transmembrane protein 196 (177 aa).

The next 4 helical transmembrane spans lie at 11 to 31 (LLVLSVLEIGLGLSSVAVGAV), 47 to 67 (SSPVWSGACFLICGVCGIFCA), 73 to 93 (LIMILFSACCICGLIGGILNI), and 106 to 126 (LYSLYLASMSLACIGISGCTI). Over residues 152–162 (HSHEMTEKDTE) the composition is skewed to basic and acidic residues. The disordered stretch occupies residues 152 to 177 (HSHEMTEKDTENITNGGGPLALNGRV).

It localises to the cytoplasm. Its subcellular location is the membrane. The protein is Transmembrane protein 196 (tmem196) of Xenopus tropicalis (Western clawed frog).